Here is a 1682-residue protein sequence, read N- to C-terminus: Sodium channel protein type 7 subunit alpha (1682 aa).

Residues 1–117 are Cytoplasmic-facing; that stretch reads MLASPEPKGL…RRTTIKVLVH (117 aa). Residues 100–401 form an I repeat; the sequence is TLSPFNCIRR…ILAMAYEEEK (302 aa). A helical transmembrane segment spans residues 118–137; the sequence is PFFQLFILISVLIDCVFMSL. The Extracellular portion of the chain corresponds to 138–141; it reads TNLP. The helical transmembrane segment at 142-167 threads the bilayer; it reads KWRPVLENTLLGIYTFEILVKLFARG. The Cytoplasmic segment spans residues 168–178; the sequence is VWAGSFSFLGD. The helical transmembrane segment at 179–196 threads the bilayer; the sequence is PWNWLDFSVTVFEVIIRY. The Extracellular portion of the chain corresponds to 197 to 200; that stretch reads SPLD. A helical membrane pass occupies residues 201 to 219; sequence FIPTLQTARTLRILKIIPL. At 220 to 237 the chain is on the cytoplasmic side; that stretch reads NQGLKSLVGVLIHCLKQL. A helical membrane pass occupies residues 238-259; the sequence is IGVIILTLFFLSIFSLIGMGLF. Residues 260–338 are Extracellular-facing; that stretch reads MGNLKHKCFR…PDQGFTNFDS (79 aa). Residues Cys-267 and Cys-307 are joined by a disulfide bond. N-linked (GlcNAc...) asparagine glycans are attached at residues Asn-276, Asn-281, and Asn-309. Residues 339-366 constitute an intramembrane region (pore-forming); sequence FGWALFALFRLMAQDYPEVLYHQILYAS. A topological domain (extracellular) is located at residue Gly-367. A helical transmembrane segment spans residues 368-407; sequence KVYMIFFVVVSFLFSFYMASLFLGILAMAYEEEKQRVGEI. Over 408–505 the chain is Cytoplasmic; the sequence is SKKIEPKFQQ…EFVHRIIMAP (98 aa). Ser-442 is modified (phosphoserine; by PKA). The II repeat unit spans residues 487-758; that stretch reads CSPCWLKLKE…QLAVARIKKG (272 aa). The helical transmembrane segment at 506 to 521 threads the bilayer; sequence FTDLFLIICIILNVCF. Topologically, residues 522–530 are extracellular; the sequence is LTLEHYPMS. The helical transmembrane segment at 531–559 threads the bilayer; it reads KQTNTLLNIGNLVFIGIFTAEMIFKIIAM. Over 560 to 568 the chain is Cytoplasmic; it reads HPYGYFQVG. The helical transmembrane segment at 569–586 threads the bilayer; sequence WNIFDSMIVFHGLIELCL. Residues 587–592 lie on the Extracellular side of the membrane; it reads ANVAGM. The chain crosses the membrane as a helical span at residues 593–609; that stretch reads ALLRLFRMLRIFKLGKY. Residues 610–626 are Cytoplasmic-facing; that stretch reads WPTFQILMWSLSNSWVA. The chain crosses the membrane as a helical span at residues 627 to 655; it reads LKDLVLLLFTFIFFSAAFGMKLFGKNYEE. The Extracellular portion of the chain corresponds to 656-673; it reads FVCHIDKDCQLPRWHMHD. 2 disulfide bridges follow: Cys-658-Cys-664 and Cys-696-Cys-705. Residues 674 to 700 constitute an intramembrane region (pore-forming); sequence FFHSFLNVFRILCGEWVETLWDCMEVA. Residue Gly-701 is a topological domain, extracellular. Residues 702-732 traverse the membrane as a helical segment; it reads QSWCIPFYLMVILIGNLLVLYLFLALVSSFS. Residues 733-934 lie on the Cytoplasmic side of the membrane; the sequence is SCKDVTAEEN…KTCCKIVENN (202 aa). A Phosphothreonine; by PKA modification is found at Thr-777. Residues 801 to 871 form a disordered region; it reads TQDFLKDKEK…SKEKIKQSSS (71 aa). Residues 804 to 819 are compositionally biased toward basic and acidic residues; that stretch reads FLKDKEKSSGTEKNAT. A compositionally biased stretch (polar residues) spans 820–834; that stretch reads ENESQSLIPSPSVSE. Ser-843 is subject to Phosphoserine. Residues Ser-869 and Ser-905 each carry the phosphoserine; by PKA modification. Residues 916 to 1224 form an III repeat; that stretch reads KGKIWQNIRK…RKQYRRLKKL (309 aa). A helical membrane pass occupies residues 935–953; sequence WFKCFIGLVTLLSTGTLAF. The Extracellular segment spans residues 954–961; it reads EDIYMDQR. A helical transmembrane segment spans residues 962-990; the sequence is KTIKILLEYADMIFTYIFILEMLLKWMAY. The Cytoplasmic portion of the chain corresponds to 991–998; sequence GFKAYFSN. Residues 999–1020 traverse the membrane as a helical segment; it reads GWYRLDFVVVIVFCLSLIGKTR. Glu-1021 is a topological domain (extracellular). The helical transmembrane segment at 1022–1040 threads the bilayer; the sequence is ELKPLISMKFLRPLRVLSQ. The Cytoplasmic portion of the chain corresponds to 1041 to 1055; that stretch reads FERMKVVVRALIKTT. A helical membrane pass occupies residues 1056 to 1080; that stretch reads LPTLNVFLVCLMIWLIFSIMGVDLF. The Extracellular portion of the chain corresponds to 1081–1127; it reads AGRFYECIDPTSGERFPSSEVMNKSRCESLLFNESMLWENAKMNFDN. A disulfide bond links Cys-1087 and Cys-1107. Residues Asn-1103 and Asn-1113 are each glycosylated (N-linked (GlcNAc...) asparagine). The segment at residues 1128–1154 is an intramembrane region (pore-forming); the sequence is VGNGFLSLLQVATFNGWITIMNSAIDS. Residues 1155-1167 lie on the Extracellular side of the membrane; that stretch reads VAVNIQPHFEVNI. A helical transmembrane segment spans residues 1168-1202; the sequence is YMYCYFINFIIFGVFLPLSMLITVIIDNFNKHKIK. Over 1203–1250 the chain is Cytoplasmic; that stretch reads LGGSNIFITVKQRKQYRRLKKLMYEDSQRPVPRPLNKLQGFIFDVVTS. The stretch at 1233–1531 is one IV repeat; sequence VPRPLNKLQG…WKRFDPDRTQ (299 aa). A helical transmembrane segment spans residues 1251-1272; the sequence is QAFNVIVMVLICFQAIAMMIDT. The Extracellular portion of the chain corresponds to 1273–1276; the sequence is DVQS. Residues 1277–1305 traverse the membrane as a helical segment; sequence LQMSIALYWINSIFVMLYTMECILKLIAF. At 1306-1312 the chain is on the cytoplasmic side; it reads RCFYFTI. The chain crosses the membrane as a helical span at residues 1313 to 1338; the sequence is AWNIFDFMVVIFSITGLCLPMTVGSY. Residues 1339–1341 are Extracellular-facing; it reads LVP. The helical transmembrane segment at 1342-1362 threads the bilayer; sequence PSLVQLILLSRIIHMLRLGKG. At 1363-1377 the chain is on the cytoplasmic side; it reads PKVFHNLMLPLMLSL. Residues 1378-1402 form a helical membrane-spanning segment; it reads PALLNIILLIFLVMFIYAVFGMYNF. Residues 1403 to 1420 are Extracellular-facing; sequence AYVKKEAGINDVSNFETF. The pore-forming intramembrane region spans 1421–1444; the sequence is GNSMLCLFQVAIFAGWDGMLDAIF. Residues 1445–1468 lie on the Extracellular side of the membrane; it reads NSKWSDCDPDKINPGTQVRGDCGN. Cys-1451 and Cys-1466 are oxidised to a cystine. A helical membrane pass occupies residues 1469 to 1504; sequence PSVGIFYFVSYILISWLIIVNMYIVVVMEFLNIASK. The Cytoplasmic portion of the chain corresponds to 1505–1682; that stretch reads KKNKTLSEDD…KEKSPIQSQI (178 aa).

Belongs to the sodium channel (TC 1.A.1.10) family. SCN7A subfamily. In terms of assembly, the sodium channel formed by SCN7A is probably a heterooligomeric complex consisting of the ion conducting pore forming alpha subunit SCN7A and regulatory beta subunits such as SCN3B. Interacts with ATP1A1; activates ATP1A1 and thereby indirectly signals to nearby neurons to regulate sodium homeostasis. In terms of tissue distribution, heart and uterus.

The protein resides in the cell membrane. It catalyses the reaction Na(+)(in) = Na(+)(out). Functionally, sodium leak channel functioning as an osmosensor regulating sodium ion levels in various tissues and organs. While most sodium channels are voltage-gated, SCN7A is not and lets sodium flow through membrane along its concentration gradient. In glial cells of the central nervous system, senses body-fluid sodium levels and controls salt intake behavior as well as voluntary water intake through activation of nearby neurons to maintain appropriate sodium levels in the body. By mediating sodium influx into keratinocytes, also plays a role in skin barrier homeostasis. This Homo sapiens (Human) protein is Sodium channel protein type 7 subunit alpha.